The primary structure comprises 544 residues: Methionine--tRNA ligase (544 aa).

A 'HIGH' region motif is present at residues 10-20 (PYANGSLHLGH). Cys141, Cys144, Cys153, and Cys156 together coordinate Zn(2+). A 'KMSKS' region motif is present at residues 329–333 (KLSTS). Position 332 (Thr332) interacts with ATP.

The protein belongs to the class-I aminoacyl-tRNA synthetase family. MetG type 1 subfamily. Monomer. It depends on Zn(2+) as a cofactor.

The protein resides in the cytoplasm. The enzyme catalyses tRNA(Met) + L-methionine + ATP = L-methionyl-tRNA(Met) + AMP + diphosphate. Its function is as follows. Is required not only for elongation of protein synthesis but also for the initiation of all mRNA translation through initiator tRNA(fMet) aminoacylation. In Bacillus cereus (strain Q1), this protein is Methionine--tRNA ligase.